The following is a 202-amino-acid chain: ATP-dependent Clp protease proteolytic subunit (202 aa).

The active-site Nucleophile is Ser106. Residue His131 is part of the active site.

Belongs to the peptidase S14 family. Fourteen ClpP subunits assemble into 2 heptameric rings which stack back to back to give a disk-like structure with a central cavity, resembling the structure of eukaryotic proteasomes.

The protein resides in the cytoplasm. It carries out the reaction Hydrolysis of proteins to small peptides in the presence of ATP and magnesium. alpha-casein is the usual test substrate. In the absence of ATP, only oligopeptides shorter than five residues are hydrolyzed (such as succinyl-Leu-Tyr-|-NHMec, and Leu-Tyr-Leu-|-Tyr-Trp, in which cleavage of the -Tyr-|-Leu- and -Tyr-|-Trp bonds also occurs).. Functionally, cleaves peptides in various proteins in a process that requires ATP hydrolysis. Has a chymotrypsin-like activity. Plays a major role in the degradation of misfolded proteins. In Shewanella sp. (strain MR-7), this protein is ATP-dependent Clp protease proteolytic subunit.